Consider the following 382-residue polypeptide: MPADVKAAQSSAGDSRPGERDKALDLVLGQIERNFGKGSIMRLGDASRMRVETISTGALTLDLALGGGYPKGRVVEVYGPESSGKTTLTLHAIAEVQKRGGVAAFVDAEHALDPVYAASLGVDIENLLVSQPDTGEMALEIVDQLVRSAAVDIVVVDSVAALTPRAEIEGEMGDLAVGAQARLMSQAMRKITGNIGKSGCTVIFLNQLRLKIGVTYGNPETTTGGNALKFYASVRLDIRRIQTLKRGTEEYGIRAKVKVAKNKVAPPFRIAEFDILFGRGISTLGCVLDLAEETGVVTRKGAWYSYEGDNIGQGRDNTIGWLEQNPEAKDAIEVLVRQKLTEGSEVTANSMRPLAAAARSAAAKPSAKTADTDKKLVADGAA.

The tract at residues 1 to 20 is disordered; sequence MPADVKAAQSSAGDSRPGER. An ATP-binding site is contributed by 79 to 86; that stretch reads GPESSGKT. Over residues 360–369 the composition is skewed to low complexity; that stretch reads SAAAKPSAKT. Residues 360–382 are disordered; sequence SAAAKPSAKTADTDKKLVADGAA. Residues 370–382 show a composition bias toward basic and acidic residues; it reads ADTDKKLVADGAA.

It belongs to the RecA family.

It localises to the cytoplasm. Can catalyze the hydrolysis of ATP in the presence of single-stranded DNA, the ATP-dependent uptake of single-stranded DNA by duplex DNA, and the ATP-dependent hybridization of homologous single-stranded DNAs. It interacts with LexA causing its activation and leading to its autocatalytic cleavage. This chain is Protein RecA, found in Synechococcus sp. (strain CC9311).